Here is a 200-residue protein sequence, read N- to C-terminus: Putative 3-methyladenine DNA glycosylase (200 aa).

Belongs to the DNA glycosylase MPG family.

The chain is Putative 3-methyladenine DNA glycosylase from Bradyrhizobium diazoefficiens (strain JCM 10833 / BCRC 13528 / IAM 13628 / NBRC 14792 / USDA 110).